Reading from the N-terminus, the 177-residue chain is Large ribosomal subunit protein uL6 (177 aa).

This sequence belongs to the universal ribosomal protein uL6 family. As to quaternary structure, part of the 50S ribosomal subunit.

Functionally, this protein binds to the 23S rRNA, and is important in its secondary structure. It is located near the subunit interface in the base of the L7/L12 stalk, and near the tRNA binding site of the peptidyltransferase center. The protein is Large ribosomal subunit protein uL6 of Rickettsia akari (strain Hartford).